The sequence spans 112 residues: UstYa family oxidase VicYb (112 aa).

2 consecutive short sequence motifs (HXXHC) follow at residues 9 to 13 (HYLHC) and 36 to 40 (HLDHC).

This sequence belongs to the ustYa family.

The protein operates within mycotoxin biosynthesis. Functionally, ustYa family oxidase, part of the gene cluster that mediates the biosynthesis of the secondary metabolite victorin, the molecular basis for Victoria blight of oats. Within the pathway, vicYb catalyzes the oxidative cyclization of the core peptide. The pathway starts with the processing of the precursor vicA1 by several endopeptidases including kexin proteases as well as the cluster-specific S28 family peptidases vicPa and vicPb to produce 7 identical copies of the hexapeptide Gly-Leu-Lys-Leu-Ala-Phe. After being excised from the precursor peptide, the core peptides are cyclized and modified post-translationally by enzymes encoded within the gene cluster. The ustYa family oxidase vicYb is required for the formation of the macrocycle in victorin and the copper amine oxidases (CAOs) vicK1 and vicK2 are responsible for converting victorin to the active form by oxidizing the N-terminal glycyl residue in the peptides to glyoxylate. Relaxed substrate specificity of enzymes in the victorin biosynthetic pathway results in a metabolic grid that produces a set of analogs including victorinines B, C, E or HV-toxin M. The sequence is that of UstYa family oxidase VicYb from Bipolaris victoriae (strain FI3) (Victoria blight of oats agent).